A 493-amino-acid polypeptide reads, in one-letter code: GTPase Der (493 aa).

Positions 3–166 (PVIALVGRPN…EALGIFPKDN (164 aa)) constitute an EngA-type G 1 domain. GTP contacts are provided by residues 9–16 (GRPNVGKS), 56–60 (DTGGI), and 118–121 (NKVD). The disordered stretch occupies residues 166 to 195 (NAEEEGEGEPASEEVAEGEEPTRIPGPSEK). The span at 167–184 (AEEEGEGEPASEEVAEGE) shows a compositional bias: acidic residues. An EngA-type G 2 domain is found at 198 to 371 (IKIAIIGRPN…SVQESFRSAV (174 aa)). Residues 204–211 (GRPNVGKS), 251–255 (DTAGV), and 316–319 (NKWD) contribute to the GTP site. Residues 372–456 (TRWPTSRLTS…PIRIEYKGGE (85 aa)) enclose the KH-like domain. The segment covering 454–463 (GGENPYEGKK) has biased composition (basic and acidic residues). The disordered stretch occupies residues 454–493 (GGENPYEGKKNSLTARQVNKKRRLMSHHKKAEKKKKDKRR). Basic residues predominate over residues 471–493 (VNKKRRLMSHHKKAEKKKKDKRR).

Belongs to the TRAFAC class TrmE-Era-EngA-EngB-Septin-like GTPase superfamily. EngA (Der) GTPase family. As to quaternary structure, associates with the 50S ribosomal subunit.

Functionally, GTPase that plays an essential role in the late steps of ribosome biogenesis. The polypeptide is GTPase Der (Pseudomonas aeruginosa (strain ATCC 15692 / DSM 22644 / CIP 104116 / JCM 14847 / LMG 12228 / 1C / PRS 101 / PAO1)).